The primary structure comprises 366 residues: S-adenosylmethionine synthase 1 (366 aa).

Glu-18 lines the K(+) pocket. Positions 31 and 74 each coordinate L-methionine. ATP is bound by residues 142–144, 210–213, Asp-221, 227–228, Ala-244, Lys-248, and Lys-252; these read DGN, SGRF, and RK. Asp-221 is a binding site for L-methionine. Lys-252 contacts L-methionine.

The protein belongs to the AdoMet synthase family. In terms of assembly, homotetramer. The cofactor is Mn(2+). Requires Mg(2+) as cofactor. It depends on Co(2+) as a cofactor. K(+) is required as a cofactor.

Its subcellular location is the cytoplasm. The catalysed reaction is L-methionine + ATP + H2O = S-adenosyl-L-methionine + phosphate + diphosphate. The protein operates within amino-acid biosynthesis; S-adenosyl-L-methionine biosynthesis; S-adenosyl-L-methionine from L-methionine: step 1/1. Catalyzes the formation of S-adenosylmethionine from methionine and ATP. The reaction comprises two steps that are both catalyzed by the same enzyme: formation of S-adenosylmethionine (AdoMet) and triphosphate, and subsequent hydrolysis of the triphosphate. The chain is S-adenosylmethionine synthase 1 (SAMS1) from Pisum sativum (Garden pea).